The chain runs to 431 residues: Histidinol dehydrogenase (431 aa).

Tyr124, Gln187, and Asn210 together coordinate NAD(+). Substrate contacts are provided by Ser236, Gln258, and His261. Residues Gln258 and His261 each coordinate Zn(2+). Catalysis depends on proton acceptor residues Glu325 and His326. 4 residues coordinate substrate: His326, Asp359, Glu413, and His418. A Zn(2+)-binding site is contributed by Asp359. His418 provides a ligand contact to Zn(2+).

This sequence belongs to the histidinol dehydrogenase family. Zn(2+) is required as a cofactor.

The enzyme catalyses L-histidinol + 2 NAD(+) + H2O = L-histidine + 2 NADH + 3 H(+). The protein operates within amino-acid biosynthesis; L-histidine biosynthesis; L-histidine from 5-phospho-alpha-D-ribose 1-diphosphate: step 9/9. Functionally, catalyzes the sequential NAD-dependent oxidations of L-histidinol to L-histidinaldehyde and then to L-histidine. This Legionella pneumophila (strain Paris) protein is Histidinol dehydrogenase.